Consider the following 158-residue polypeptide: Ribosome maturation factor RimP (158 aa).

It belongs to the RimP family.

It is found in the cytoplasm. Its function is as follows. Required for maturation of 30S ribosomal subunits. The polypeptide is Ribosome maturation factor RimP (Leuconostoc citreum (strain KM20)).